We begin with the raw amino-acid sequence, 204 residues long: Inactive ribonuclease-like protein 9 (204 aa).

The first 26 residues, 1–26 (MMRTLITTHPLLLLLLLQQLLQPVQL), serve as a signal peptide directing secretion. 3 disulfide bridges follow: cysteine 97-cysteine 152, cysteine 115-cysteine 167, and cysteine 122-cysteine 129. N-linked (GlcNAc...) asparagine glycans are attached at residues asparagine 130 and asparagine 142.

This sequence belongs to the pancreatic ribonuclease family.

It localises to the secreted. Does not exhibit any ribonuclease activity. This Chlorocebus pygerythrus (Vervet monkey) protein is Inactive ribonuclease-like protein 9 (RNASE9).